The chain runs to 139 residues: Peptide methionine sulfoxide reductase MsrB (139 aa).

In terms of domain architecture, MsrB spans 14–137; sequence DEEWRRELTP…NSISLDFQPE (124 aa). Residues cysteine 53, cysteine 56, cysteine 102, and cysteine 105 each contribute to the Zn(2+) site. Catalysis depends on cysteine 126, which acts as the Nucleophile.

It belongs to the MsrB Met sulfoxide reductase family. Requires Zn(2+) as cofactor.

It catalyses the reaction L-methionyl-[protein] + [thioredoxin]-disulfide + H2O = L-methionyl-(R)-S-oxide-[protein] + [thioredoxin]-dithiol. The chain is Peptide methionine sulfoxide reductase MsrB from Leifsonia xyli subsp. xyli (strain CTCB07).